A 432-amino-acid polypeptide reads, in one-letter code: Cyclic di-GMP phosphodiesterase CdgJ (432 aa).

The EAL domain maps to 1–232 (MVRCLWAAEC…QRYVSPEHVI (232 aa)). Positions 226–413 (VSPEHVIAMQ…CLELGFDLED (188 aa)) constitute an HDOD domain.

It catalyses the reaction 3',3'-c-di-GMP + H2O = 5'-phosphoguanylyl(3'-&gt;5')guanosine + H(+). Functionally, phosphodiesterase (PDE) that catalyzes the hydrolysis of cyclic diguanylate (c-di-GMP). Positively regulates motility and negatively regulates biofilm formation. The sequence is that of Cyclic di-GMP phosphodiesterase CdgJ from Vibrio cholerae serotype O1 (strain ATCC 39315 / El Tor Inaba N16961).